The following is a 368-amino-acid chain: MAKKALLIGINYVGTKAELRGCVNDVRRMRISLVERYGFSEENIKMLIDTDSSSIKPTGKNIRQALLDLVEPAKSGDVLFVHYSGHGTRLPAETGEDDDTGYDECIVPSDMNLITDDDFRDLVDMVPKDCPITIISDSCHSGGLIDEAKEQIGESTKKKKDSGDSSTINKETEAEIIEVGNRSLPLETLIDMLKQETGNDDIEVGKIRTTLFDMFGDDSSPKVKKFMNVILSNLQETTTTIQTVSDEVLGSVENLAQEFLEQKLSDDVKPAIQDVYAGAINGALPDNGILISGCQTDQTSSDASPPGHPELAYGALTNAIQIIIGETKGKISNKDLVLKARKLLRKQGFDQRPGLYCNDAYVNARFIC.

Catalysis depends on residues His86 and Cys139. The residue at position 139 (Cys139) is an S-nitrosocysteine. The tract at residues 153–174 (GESTKKKKDSGDSSTINKETEA) is disordered.

This sequence belongs to the peptidase C14B family. In terms of processing, proteolytically processed; by an autocatalytic mechanism. As to expression, expressed in roots and flower buds.

This Arabidopsis thaliana (Mouse-ear cress) protein is Metacaspase-6 (AMC6).